Reading from the N-terminus, the 117-residue chain is uncharacterized protein (117 aa).

This is an uncharacterized protein from Escherichia coli O6:H1 (strain CFT073 / ATCC 700928 / UPEC).